The sequence spans 105 residues: N(4)-acetylcytidine amidohydrolase (105 aa).

Residues 7–93 (TFFERFEHDI…VIAEIYPGLE (87 aa)) enclose the ASCH domain. Residue Lys-21 is the Proton acceptor of the active site. The Nucleophile role is filled by Thr-24. The active-site Proton donor is the Glu-74.

The protein belongs to the N(4)-acetylcytidine amidohydrolase family.

It catalyses the reaction N(4)-acetylcytidine + H2O = cytidine + acetate + H(+). The enzyme catalyses N(4)-acetyl-2'-deoxycytidine + H2O = 2'-deoxycytidine + acetate + H(+). The catalysed reaction is N(4)-acetylcytosine + H2O = cytosine + acetate + H(+). Functionally, catalyzes the hydrolysis of N(4)-acetylcytidine (ac4C). The chain is N(4)-acetylcytidine amidohydrolase from Shewanella baltica (strain OS223).